Reading from the N-terminus, the 468-residue chain is Peroxisome proliferator-activated receptor alpha (468 aa).

Positions 1-20 are disordered; the sequence is MVDTESQICPLSPFGDDDLE. The segment at residues 99 to 173 is a DNA-binding region (nuclear receptor); it reads NIECRICGDK…DGMSHNAIRF (75 aa). 2 consecutive NR C4-type zinc fingers follow at residues 102 to 122 and 139 to 161; these read CRIC…CEGC and CDRS…FQKC. An NR LBD domain is found at 239–466; it reads FVIHDMETLC…HPLLQEIYRD (228 aa). Residues 304–433 form a required for heterodimerization with RXRA region; the sequence is DQVTLLKYGV…PKLLQKMADL (130 aa).

Belongs to the nuclear hormone receptor family. NR1 subfamily. As to quaternary structure, heterodimer; with RXRA. This heterodimerization is required for DNA binding and transactivation activity. Interacts with NCOA3 coactivator. Interacts with CITED2; the interaction stimulates its transcriptional activity. Also interacts with PPARBP in vitro. Interacts with AKAP13, LPIN1, PRDM16 and coactivator NCOA6. Interacts with ASXL1 and ASXL2. Interacts with PER2. Interacts with SIRT1; the interaction seems to be modulated by NAD(+) levels. Interacts with CRY1 and CRY2. In hepatocytes, interacts with PAQR3 and HUWE1; the interactions promote PPARA poylubiquitination and HUWE1-mediated degradation. Ubiquitinated by E3 ubiquitin-protein ligase HUWE1; leading to proteasomal degradation. Post-translationally, phosphorylated.

It is found in the nucleus. Functionally, ligand-activated transcription factor. Key regulator of lipid metabolism. Activated by the endogenous ligand 1-palmitoyl-2-oleoyl-sn-glycerol-3-phosphocholine (16:0/18:1-GPC). Activated by oleylethanolamide, a naturally occurring lipid that regulates satiety. Receptor for peroxisome proliferators such as hypolipidemic drugs and fatty acids. Regulates the peroxisomal beta-oxidation pathway of fatty acids. Functions as a transcription activator for the ACOX1 and P450 genes. Transactivation activity requires heterodimerization with RXRA and is antagonized by NR2C2. May be required for the propagation of clock information to metabolic pathways regulated by PER2. The sequence is that of Peroxisome proliferator-activated receptor alpha (PPARA) from Phascolarctos cinereus (Koala).